The chain runs to 391 residues: MDLEKNYPTPRTSRTGHGGVNQLGGVFVNGRPLPDVVRQRIVELAHQGVRPCDISRQLRVSHGCVSKILGRYYETGSIKPGVIGGSKPKVATPKVVEKIAEYKRQNPTMFAWEIRDRLLAERVCDNDTVPSVSSINRIIRTKVQQPPNQPVPASSHSIVSTGSVTQVSSVSTDSAGSSYSISGILGITSPSADTNKRKRDEGIQESPVPNGHSLPGRDFLRKQMRGDLFTQQQLEVLDRVFERQHYSDIFTTTEPIKPEQTTEYSAMASLAGGLDDMKANLASPTPADIGSSVPGPQSYPIVTGRDLASTTLPGYPPHVPPAGQGSYSAPTLTGMVPGSEFSGSPYSHPQYSSYNDSWRFPNPGLLGSPYYYSAAARGAAPPAAATAYDRH.

A disordered region spans residues 1 to 21 (MDLEKNYPTPRTSRTGHGGVN). A DNA-binding region (paired) is located at residues 16 to 142 (GHGGVNQLGG…SSINRIIRTK (127 aa)). Residues 19–75 (GVNQLGGVFVNGRPLPDVVRQRIVELAHQGVRPCDISRQLRVSHGCVSKILGRYYET) are PAI subdomain. The RED subdomain stretch occupies residues 94–142 (KVVEKIAEYKRQNPTMFAWEIRDRLLAERVCDNDTVPSVSSINRIIRTK). Positions 182–218 (SGILGITSPSADTNKRKRDEGIQESPVPNGHSLPGRD) are disordered.

In terms of assembly, interacts with ETS1; this interaction alters PAX5 DNA-binding properties. Binds DNA as a monomer. Interacts with TBP; this interaction allows PAX5 to interact with the basal transcription machinery. Interacts with RB1. Interacts with TLE4. Interacts with DAXX. (Microbial infection) Interacts (via N-terminus) with Epstein-Barr virus protein BZLF1 (via C-terminus); this interaction inhibits BZLF1-mediated lytic viral reactivation. Interacts also with EBNA1; this interaction promotes EBNA1-dependent transcription. O-glycosylated. Post-translationally, phosphorylated by SYK. This phosphorylation plays an important role in the abolition of BLIMP1 repression by PAX5 in order to trigger plasma cell differentiation.

The protein localises to the nucleus. Functionally, transcription factor that plays an essential role in commitment of lymphoid progenitors to the B-lymphocyte lineage. Fulfills a dual role by repressing B-lineage inappropriate genes and simultaneously activating B-lineage-specific genes. In turn, regulates cell adhesion and migration, induces V(H)-to-D(H)J(H) recombination, facilitates pre-B-cell receptor signaling and promotes development to the mature B-cell stage. Repression of the cohesin-release factor WAPL causes global changes of the chromosomal architecture in pro-B cells to facilitate the generation of a diverse antibody repertoire. Its function is as follows. (Microbial infection) Plays an essential role in the maintenance of Epstein-Barr virus genome copy number within the host cell by promoting EBNA1/oriP-dependent binding and transcription. Also participates in the inhibition of lytic EBV reactivation by modulating viral BZLF1 activity. The chain is Paired box protein Pax-5 (PAX5) from Homo sapiens (Human).